The sequence spans 111 residues: Large ribosomal subunit protein uL22 (111 aa).

The protein belongs to the universal ribosomal protein uL22 family. Part of the 50S ribosomal subunit.

In terms of biological role, this protein binds specifically to 23S rRNA; its binding is stimulated by other ribosomal proteins, e.g. L4, L17, and L20. It is important during the early stages of 50S assembly. It makes multiple contacts with different domains of the 23S rRNA in the assembled 50S subunit and ribosome. The globular domain of the protein is located near the polypeptide exit tunnel on the outside of the subunit, while an extended beta-hairpin is found that lines the wall of the exit tunnel in the center of the 70S ribosome. In Chlamydia trachomatis serovar L2b (strain UCH-1/proctitis), this protein is Large ribosomal subunit protein uL22.